Consider the following 167-residue polypeptide: Glucose-6-phosphate isomerase (167 aa).

The active-site Proton donor is glutamate 54. Histidine 85 is an active-site residue.

This sequence belongs to the GPI family.

Its subcellular location is the cytoplasm. It catalyses the reaction alpha-D-glucose 6-phosphate = beta-D-fructose 6-phosphate. Its pathway is carbohydrate biosynthesis; gluconeogenesis. It functions in the pathway carbohydrate degradation; glycolysis; D-glyceraldehyde 3-phosphate and glycerone phosphate from D-glucose: step 2/4. Its function is as follows. Catalyzes the reversible isomerization of glucose-6-phosphate to fructose-6-phosphate. In Klebsiella oxytoca, this protein is Glucose-6-phosphate isomerase.